The primary structure comprises 143 residues: Large-conductance mechanosensitive channel (143 aa).

A run of 3 helical transmembrane segments spans residues 10-30, 40-60, and 86-106; these read FAVK…GAFG, VIMP…LFLV, and GSFI…FMMV.

It belongs to the MscL family. In terms of assembly, homopentamer.

It localises to the cell inner membrane. Functionally, channel that opens in response to stretch forces in the membrane lipid bilayer. May participate in the regulation of osmotic pressure changes within the cell. The sequence is that of Large-conductance mechanosensitive channel from Paracidovorax citrulli (strain AAC00-1) (Acidovorax citrulli).